The sequence spans 319 residues: Protoheme IX farnesyltransferase (319 aa).

8 helical membrane passes run 59–79, 108–128, 131–151, 158–178, 183–203, 232–252, 254–274, and 299–319; these read IGLILATLVGGAFAAGSAGAF, EALVFSWLLGAAAIAILWFGA, LSAWLGLGAIFFYVVIYTIIL, NIVWGGAAGCFPVLIAWAAVT, WPAIILFMVIFLWTPPHYWPL, VVLYAWAMVACSLLMVPAGGA, WVYTVTAVLAGAWFLYESHAL, and LTLLFIALAVDPFVGPAVIGG.

This sequence belongs to the UbiA prenyltransferase family. Protoheme IX farnesyltransferase subfamily.

The protein resides in the cell membrane. The enzyme catalyses heme b + (2E,6E)-farnesyl diphosphate + H2O = Fe(II)-heme o + diphosphate. Its pathway is porphyrin-containing compound metabolism; heme O biosynthesis; heme O from protoheme: step 1/1. In terms of biological role, converts heme B (protoheme IX) to heme O by substitution of the vinyl group on carbon 2 of heme B porphyrin ring with a hydroxyethyl farnesyl side group. This chain is Protoheme IX farnesyltransferase, found in Pseudarthrobacter chlorophenolicus (strain ATCC 700700 / DSM 12829 / CIP 107037 / JCM 12360 / KCTC 9906 / NCIMB 13794 / A6) (Arthrobacter chlorophenolicus).